The following is a 174-amino-acid chain: Disulfide bond formation protein B (174 aa).

Residues 1–17 lie on the Cytoplasmic side of the membrane; the sequence is MSFQVVTGWLDNSPRRI. Residues 18 to 34 form a helical membrane-spanning segment; the sequence is FAFVSLASIGMLAFGQY. Topologically, residues 35-52 are periplasmic; it reads LQHVVGLEPCPMCIVQRY. An intrachain disulfide couples C44 to C47. The chain crosses the membrane as a helical span at residues 53–67; that stretch reads ALVLVAIIAGLTGAS. At 68–74 the chain is on the cytoplasmic side; that stretch reads GRKGLHL. A helical transmembrane segment spans residues 75–92; it reads GGAVLMLGSSGFGAYVAA. At 93–148 the chain is on the periplasmic side; the sequence is RQSWLQWYPPEVVSCGRDFYGMIETFPLQRAIPMIFKGSGDCSKVDWTFLGGSIAN. C107 and C134 are disulfide-bonded. A helical membrane pass occupies residues 149 to 167; that stretch reads WTFVVFGLIVLLSLALIWR. The Cytoplasmic portion of the chain corresponds to 168–174; sequence RVSRRVS.

Belongs to the DsbB family.

It localises to the cell inner membrane. Required for disulfide bond formation in some periplasmic proteins. Acts by oxidizing the DsbA protein. The protein is Disulfide bond formation protein B of Albidiferax ferrireducens (strain ATCC BAA-621 / DSM 15236 / T118) (Rhodoferax ferrireducens).